The following is a 420-amino-acid chain: Histidine--tRNA ligase (420 aa).

The protein belongs to the class-II aminoacyl-tRNA synthetase family. Homodimer.

The protein localises to the cytoplasm. It carries out the reaction tRNA(His) + L-histidine + ATP = L-histidyl-tRNA(His) + AMP + diphosphate + H(+). The chain is Histidine--tRNA ligase from Acholeplasma laidlawii (strain PG-8A).